Consider the following 217-residue polypeptide: Probable GTP-binding protein EngB (217 aa).

Residues 24–207 (SQPEICFAGR…HELIESWLIP (184 aa)) enclose the EngB-type G domain. Residues 32–39 (GRSNAGKS), 59–63 (GRTQH), 81–84 (DLPG), 148–151 (TKCD), and 185–188 (LFSA) each bind GTP. 2 residues coordinate Mg(2+): S39 and T61.

Belongs to the TRAFAC class TrmE-Era-EngA-EngB-Septin-like GTPase superfamily. EngB GTPase family. Requires Mg(2+) as cofactor.

Necessary for normal cell division and for the maintenance of normal septation. The chain is Probable GTP-binding protein EngB from Paraburkholderia phytofirmans (strain DSM 17436 / LMG 22146 / PsJN) (Burkholderia phytofirmans).